A 132-amino-acid chain; its full sequence is Ribonuclease VapC15 (132 aa).

A PINc domain is found at 1–121 (MIVDTSVWIA…HRDRDYEAIR (121 aa)). Asp-96 serves as a coordination point for Mg(2+). The Mn(2+) site is built by Asp-96, Asp-114, and Asp-116.

Belongs to the PINc/VapC protein family. As to quaternary structure, crystallizes as a VapB15-VapC15(2) heterotrimer and as a VapB15(2)-VapC15(2) heterotetramer; each toxin pair forms a homodimer which creates a channel in which the antitoxin binds. The cofactor is Mg(2+). Mn(2+) is required as a cofactor.

RNase activity inhibited by EDTA. Toxic component of a type II toxin-antitoxin (TA) system. Degrades total E.coli RNA, which is partially inhibited by cognate antitoxin VapB15. Upon expression in M.smegmatis inhibits colony formation, which is neutralized by coexpression with VapB15. The sequence is that of Ribonuclease VapC15 from Mycobacterium tuberculosis (strain ATCC 25618 / H37Rv).